The primary structure comprises 284 residues: Tropomyosin isoforms a/b/d/f (284 aa).

The stretch at Met1 to Tyr284 forms a coiled coil. The tract at residues Glu40–Val78 is disordered.

Belongs to the tropomyosin family. As to expression, isoform a and isoform d are expressed in body wall muscles, vulva, anus muscles and male tail muscles. Located to the myofibrils of thin actin filaments.

The protein localises to the cytoplasm. It localises to the myofibril. Its subcellular location is the sarcomere. The protein resides in the i band. Tropomyosin, in association with the troponin complex, plays a central role in the calcium dependent regulation of muscle contraction. Involved in muscle actin filament organization and muscle arm extension and morphology. Protects actin filaments from depolymerization by unc-60 in vitro. Also has a role in male mating behavior by regulating the copulatory spicules. Binds to F-actin. The chain is Tropomyosin isoforms a/b/d/f (lev-11) from Caenorhabditis elegans.